The following is a 44-amino-acid chain: Photosystem II reaction center protein K (44 aa).

Positions 1–7 (METLLLS) are excised as a propeptide. A helical membrane pass occupies residues 23–43 (LPIIPVFFLLLAFVWQAAIGF).

This sequence belongs to the PsbK family. In terms of assembly, PSII is composed of 1 copy each of membrane proteins PsbA, PsbB, PsbC, PsbD, PsbE, PsbF, PsbH, PsbI, PsbJ, PsbK, PsbL, PsbM, PsbT, PsbX, PsbY, PsbZ, Psb30/Ycf12, at least 3 peripheral proteins of the oxygen-evolving complex and a large number of cofactors. It forms dimeric complexes.

Its subcellular location is the plastid. The protein resides in the chloroplast thylakoid membrane. In terms of biological role, one of the components of the core complex of photosystem II (PSII). PSII is a light-driven water:plastoquinone oxidoreductase that uses light energy to abstract electrons from H(2)O, generating O(2) and a proton gradient subsequently used for ATP formation. It consists of a core antenna complex that captures photons, and an electron transfer chain that converts photonic excitation into a charge separation. This is Photosystem II reaction center protein K from Phaeodactylum tricornutum (strain CCAP 1055/1).